The sequence spans 378 residues: MAAPLRPVPPQPAPRRLPTTAPLGHDTSDVLQQIMAITDQSLDEAQARKHALNCHRMKSALFSVLCEIKGKTAVSIQFQEEDPPDAQLLRLDNMLLAEGVSRPEKRGRGAAAGSTATPGGCPNDNSIEHSDYRAKLSQIRQIYHSELEKYEQACREFTTHVTNLLREQSRVRPVSCREMEHMVNTIQSKFSAIQRQLKQSTCEAVMTLRSRFLDARRKRRNFSKQATDVLNEYFYSHLSNPYPSEETKEELARKGGITVSQVSNWFGNKRIRYKKNTGKFQEEATMYTGKASTVTKARRPRGQSSCQSTPSPGPCGPLPLTNGSDVVLTLRTLAFLQPPTGGVCLQPLVHSNWQRAAPQPASSPAGESGSFNWDAASN.

Residues 1-15 (MAAPLRPVPPQPAPR) show a composition bias toward pro residues. 2 disordered regions span residues 1-24 (MAAPLRPVPPQPAPRRLPTTAPLG) and 100-125 (VSRPEKRGRGAAAGSTATPGGCPNDN). One can recognise a PBC domain in the interval 22–214 (PLGHDTSDVL…VMTLRSRFLD (193 aa)). The PBC-A stretch occupies residues 29 to 107 (DVLQQIMAIT…EGVSRPEKRG (79 aa)). Residues 109–120 (GAAAGSTATPGG) show a composition bias toward low complexity. Residues 110–214 (AAAGSTATPG…VMTLRSRFLD (105 aa)) are PBC-B. Residues 215 to 277 (ARRKRRNFSK…NKRIRYKKNT (63 aa)) constitute a DNA-binding region (homeobox; TALE-type). Disordered regions lie at residues 291-320 (ASTVTKARRPRGQSSCQSTPSPGPCGPLPL) and 355-378 (RAAPQPASSPAGESGSFNWDAASN). Residues 356 to 370 (AAPQPASSPAGESGS) are compositionally biased toward low complexity.

This sequence belongs to the TALE/PBX homeobox family. As to expression, almost exclusively expressed in testis.

It localises to the nucleus. This is Pre-B-cell leukemia transcription factor 4 (Pbx4) from Mus musculus (Mouse).